Consider the following 57-residue polypeptide: Large ribosomal subunit protein bL32c (57 aa).

It belongs to the bacterial ribosomal protein bL32 family.

It localises to the plastid. The protein localises to the chloroplast. This Phalaenopsis aphrodite subsp. formosana (Moth orchid) protein is Large ribosomal subunit protein bL32c.